Consider the following 66-residue polypeptide: uncharacterized protein (66 aa).

Positions 1–21 are disordered; that stretch reads MPGGDRTGPWGQGPRTGRRAG.

This is an uncharacterized protein from Archaeoglobus fulgidus (strain ATCC 49558 / DSM 4304 / JCM 9628 / NBRC 100126 / VC-16).